The chain runs to 92 residues: Probable Fe(2+)-trafficking protein (92 aa).

This sequence belongs to the Fe(2+)-trafficking protein family.

Its function is as follows. Could be a mediator in iron transactions between iron acquisition and iron-requiring processes, such as synthesis and/or repair of Fe-S clusters in biosynthetic enzymes. This Shewanella sp. (strain W3-18-1) protein is Probable Fe(2+)-trafficking protein.